A 459-amino-acid chain; its full sequence is Beta-glucosidase (459 aa).

The Proton donor role is filled by E171. Catalysis depends on E359, which acts as the Nucleophile.

The protein belongs to the glycosyl hydrolase 1 family.

It catalyses the reaction Hydrolysis of terminal, non-reducing beta-D-glucosyl residues with release of beta-D-glucose.. This chain is Beta-glucosidase (abg), found in Agrobacterium sp. (strain ATCC 21400).